A 207-amino-acid polypeptide reads, in one-letter code: LexA repressor (207 aa).

Positions 28–48 (RAEISRELGFKSANAAEEHLK) form a DNA-binding region, H-T-H motif. Active-site for autocatalytic cleavage activity residues include serine 123 and lysine 160.

This sequence belongs to the peptidase S24 family. Homodimer.

The catalysed reaction is Hydrolysis of Ala-|-Gly bond in repressor LexA.. In terms of biological role, represses a number of genes involved in the response to DNA damage (SOS response), including recA and lexA. In the presence of single-stranded DNA, RecA interacts with LexA causing an autocatalytic cleavage which disrupts the DNA-binding part of LexA, leading to derepression of the SOS regulon and eventually DNA repair. This Haemophilus influenzae (strain 86-028NP) protein is LexA repressor.